The sequence spans 96 residues: Protein C4 (96 aa).

G2 is lipidated: N-myristoyl glycine; by host. The interval 66–96 is disordered; that stretch reads STDDLQGEDSRQPMTLTPRQLTQEVSRRLLM. The segment covering 77 to 89 has biased composition (polar residues); that stretch reads QPMTLTPRQLTQE.

The protein belongs to the geminiviridae protein AC4/C4 family.

The protein resides in the host cell membrane. Its function is as follows. Pathogenicity determinant. May act as a suppressor of RNA-mediated gene silencing, also known as post-transcriptional gene silencing (PTGS), a mechanism of plant viral defense that limits the accumulation of viral RNAs. The protein is Protein C4 of Cynanchum acutum (Tomato).